The chain runs to 356 residues: MKGKLLSFTLFGESHGKAVGILIEGLPPGIEVKVEEMKAELERRKGIRRFSTKRRESDEPVIVSGVFNGFTTGTPVTVLVWNRDADSSYYEEIRNTPRPGHADYPAKVKFFGYNDYRGGGHFSGRLTVGVVIAGYFAKKLLERFGIRVRAYIRRIGPVECPQVEPEELFASPNPYCPDEDAFERMLEEMEKARKSGDSVGGTVEVVAINVPAGLGGPWDEDIEADLASALFRIPAVKGVEFGLGFRFAEMRGSEANDPFVVRNGRVATETNNHGGVLGGITTGMPLVARVAFKPTPSIYLPQRTVDLERMDEVELRLRGRFDSCIVPKALPVVEAMVAFVLADHLLRRKAWEGVVR.

Residues Arg-44 and Arg-49 each coordinate NADP(+). Residues 121–123 (HFS), Gly-278, 293–297 (KPTPS), and Arg-320 contribute to the FMN site.

It belongs to the chorismate synthase family. FMNH2 serves as cofactor.

The catalysed reaction is 5-O-(1-carboxyvinyl)-3-phosphoshikimate = chorismate + phosphate. It participates in metabolic intermediate biosynthesis; chorismate biosynthesis; chorismate from D-erythrose 4-phosphate and phosphoenolpyruvate: step 7/7. Its function is as follows. Catalyzes the anti-1,4-elimination of the C-3 phosphate and the C-6 proR hydrogen from 5-enolpyruvylshikimate-3-phosphate (EPSP) to yield chorismate, which is the branch point compound that serves as the starting substrate for the three terminal pathways of aromatic amino acid biosynthesis. This reaction introduces a second double bond into the aromatic ring system. This chain is Chorismate synthase, found in Thermococcus gammatolerans (strain DSM 15229 / JCM 11827 / EJ3).